Consider the following 322-residue polypeptide: Quinolinate synthase (322 aa).

Iminosuccinate-binding residues include His38 and Ser55. Cys100 serves as a coordination point for [4Fe-4S] cluster. Iminosuccinate contacts are provided by residues 126–128 and Ser143; that span reads YIN. Position 186 (Cys186) interacts with [4Fe-4S] cluster. Iminosuccinate contacts are provided by residues 212 to 214 and Thr229; that span reads HPE. Position 279 (Cys279) interacts with [4Fe-4S] cluster.

This sequence belongs to the quinolinate synthase family. Type 2 subfamily. [4Fe-4S] cluster serves as cofactor.

It localises to the cytoplasm. It carries out the reaction iminosuccinate + dihydroxyacetone phosphate = quinolinate + phosphate + 2 H2O + H(+). It functions in the pathway cofactor biosynthesis; NAD(+) biosynthesis; quinolinate from iminoaspartate: step 1/1. Its function is as follows. Catalyzes the condensation of iminoaspartate with dihydroxyacetone phosphate to form quinolinate. The polypeptide is Quinolinate synthase (Cyanothece sp. (strain PCC 7425 / ATCC 29141)).